We begin with the raw amino-acid sequence, 254 residues long: Thiazole synthase (254 aa).

The active-site Schiff-base intermediate with DXP is the K96. Residues G157, 183–184 (AG), and 205–206 (NT) contribute to the 1-deoxy-D-xylulose 5-phosphate site.

The protein belongs to the ThiG family. Homotetramer. Forms heterodimers with either ThiH or ThiS.

The protein resides in the cytoplasm. It carries out the reaction [ThiS sulfur-carrier protein]-C-terminal-Gly-aminoethanethioate + 2-iminoacetate + 1-deoxy-D-xylulose 5-phosphate = [ThiS sulfur-carrier protein]-C-terminal Gly-Gly + 2-[(2R,5Z)-2-carboxy-4-methylthiazol-5(2H)-ylidene]ethyl phosphate + 2 H2O + H(+). The protein operates within cofactor biosynthesis; thiamine diphosphate biosynthesis. Its function is as follows. Catalyzes the rearrangement of 1-deoxy-D-xylulose 5-phosphate (DXP) to produce the thiazole phosphate moiety of thiamine. Sulfur is provided by the thiocarboxylate moiety of the carrier protein ThiS. In vitro, sulfur can be provided by H(2)S. The chain is Thiazole synthase from Clostridium kluyveri (strain ATCC 8527 / DSM 555 / NBRC 12016 / NCIMB 10680 / K1).